A 75-amino-acid polypeptide reads, in one-letter code: MIRSALDSKDLAKRGESLIRQSSNRYLTTVRIAFRAKQRRFDDFDGLLEESSVKPVQRAIIELSDEQDQPDLLPG.

The protein belongs to the RNA polymerase subunit omega family. As to quaternary structure, in cyanobacteria the RNAP catalytic core is composed of 2 alpha, 1 beta, 1 beta', 1 gamma and 1 omega subunit. When a sigma factor is associated with the core the holoenzyme is formed, which can initiate transcription.

The catalysed reaction is RNA(n) + a ribonucleoside 5'-triphosphate = RNA(n+1) + diphosphate. Promotes RNA polymerase assembly. Latches the N- and C-terminal regions of the beta' subunit thereby facilitating its interaction with the beta and alpha subunits. This is DNA-directed RNA polymerase subunit omega from Prochlorococcus marinus (strain MIT 9211).